Reading from the N-terminus, the 65-residue chain is Large ribosomal subunit protein bL35 (65 aa).

The tract at residues 1-29 is disordered; it reads MPKMKTNRGAAKRFKKTGSGRIKRGKAFT. Residues 10 to 26 are compositionally biased toward basic residues; the sequence is AAKRFKKTGSGRIKRGK.

This sequence belongs to the bacterial ribosomal protein bL35 family.

The protein is Large ribosomal subunit protein bL35 of Desulfotalea psychrophila (strain LSv54 / DSM 12343).